The primary structure comprises 473 residues: Hyaluronidase-2 (473 aa).

The first 20 residues, 1 to 20, serve as a signal peptide directing secretion; it reads MWTGLGPAVTLALVLVVAWA. 2 disulfide bridges follow: C47–C343 and C214–C230. 2 N-linked (GlcNAc...) asparagine glycosylation sites follow: N77 and N106. E138 (proton donor) is an active-site residue. 2 N-linked (GlcNAc...) asparagine glycosylation sites follow: N340 and N360. One can recognise an EGF-like domain in the interval 364–442; that stretch reads AAQYCSWAQC…YLGWGGEQCQ (79 aa). 3 cysteine pairs are disulfide-bonded: C368/C379, C373/C430, and C432/C441. Residue G451 is the site of GPI-anchor amidated glycine attachment. A propeptide spans 452–473 (removed in mature form); sequence ASGAWAGSHLTGLLAVAVLAFT.

Belongs to the glycosyl hydrolase 56 family. As to quaternary structure, interacts with MST1R.

It localises to the cell membrane. It carries out the reaction Random hydrolysis of (1-&gt;4)-linkages between N-acetyl-beta-D-glucosamine and D-glucuronate residues in hyaluronate.. Catalyzes hyaluronan degradation into small fragments that are endocytosed and degraded in lysosomes by HYAL1 and exoglycosidases. Essential for the breakdown of extracellular matrix hyaluronan. This is Hyaluronidase-2 (HYAL2) from Bos taurus (Bovine).